A 246-amino-acid chain; its full sequence is 14-3-3 protein beta/alpha (246 aa).

At Met1 the chain carries N-acetylmethionine. Residue Thr2 is modified to N-acetylthreonine; in 14-3-3 protein beta/alpha, N-terminally processed. Phosphothreonine is present on Thr2. An N6-acetyllysine modification is found at Lys5. The residue at position 51 (Lys51) is an N6-acetyllysine; alternate. Lys51 participates in a covalent cross-link: Glycyl lysine isopeptide (Lys-Gly) (interchain with G-Cter in SUMO2); alternate. Ser60 carries the post-translational modification Phosphoserine. N6-acetyllysine is present on Lys70. Tyr84 and Tyr106 each carry 3'-nitrotyrosine. The residue at position 117 (Lys117) is an N6-acetyllysine. Residues Ser186 and Ser232 each carry the phosphoserine modification.

Belongs to the 14-3-3 family. Homodimer. Interacts with SAMSN1 and PRKCE. Interacts with AKAP13. Interacts with SSH1 and TORC2/CRTC2. Interacts with ABL1; the interaction results in cytoplasmic location of ABL1 and inhibition of cABL-mediated apoptosis. Interacts with ROR2 (dimer); the interaction results in phosphorylation of YWHAB on tyrosine residues. Interacts with GAB2. Interacts with YAP1 (phosphorylated form). Interacts with the phosphorylated (by AKT1) form of SRPK2. Interacts with PKA-phosphorylated AANAT. Interacts with MYO1C. Interacts with SIRT2. Interacts with the 'Thr-369' phosphorylated form of DAPK2. Interacts with PI4KB, TBC1D22A and TBC1D22B. Interacts with the 'Ser-1134' and 'Ser-1161' phosphorylated form of SOS1. Interacts (via phosphorylated form) with YWHAB; this interaction occurs in a protein kinase AKT1-dependent manner. Interacts with SLITRK1. Interacts with SYNPO2 (phosphorylated form); YWHAB competes with ACTN2 for interaction with SYNPO2. Interacts with RIPOR2 (via phosphorylated form); this interaction occurs in a chemokine-dependent manner and does not compete for binding of RIPOR2 with RHOA nor blocks inhibition of RIPOR2-mediated RHOA activity. Interacts with MARK2 and MARK3. Interacts with TESK1; the interaction is dependent on the phosphorylation of TESK1 'Ser-439' and inhibits TESK1 kinase activity. Interacts with MEFV. Interacts with HDAC4. Interacts with ADAM22 (via C-terminus). In terms of processing, isoform alpha differs from isoform beta in being phosphorylated. Phosphorylated on Ser-60 by protein kinase C delta type catalytic subunit in a sphingosine-dependent fashion. Post-translationally, isoform Short contains a N-acetylmethionine at position 1.

It is found in the cytoplasm. Its subcellular location is the melanosome. Functionally, adapter protein implicated in the regulation of a large spectrum of both general and specialized signaling pathways. Binds to a large number of partners, usually by recognition of a phosphoserine or phosphothreonine motif. Binding generally results in the modulation of the activity of the binding partner. Negative regulator of osteogenesis. Blocks the nuclear translocation of the phosphorylated form (by AKT1) of SRPK2 and antagonizes its stimulatory effect on cyclin D1 expression resulting in blockage of neuronal apoptosis elicited by SRPK2. Negative regulator of signaling cascades that mediate activation of MAP kinases via AKAP13. The protein is 14-3-3 protein beta/alpha (Ywhab) of Mus musculus (Mouse).